The following is a 202-amino-acid chain: Peptide methionine sulfoxide reductase A1 (202 aa).

The segment at 1-20 (MNILNKLGIGSSRQTNMDPS) is disordered. Ser189 bears the Phosphoserine mark.

It belongs to the MsrA Met sulfoxide reductase family.

Its subcellular location is the cytoplasm. The protein localises to the cytosol. The catalysed reaction is L-methionyl-[protein] + [thioredoxin]-disulfide + H2O = L-methionyl-(S)-S-oxide-[protein] + [thioredoxin]-dithiol. The enzyme catalyses [thioredoxin]-disulfide + L-methionine + H2O = L-methionine (S)-S-oxide + [thioredoxin]-dithiol. In terms of biological role, catalyzes the reduction of methionine sulfoxide (MetSO) to methionine in proteins. Plays a protective role against oxidative stress by restoring activity to proteins that have been inactivated by methionine oxidation. MSRA family specifically reduces the MetSO S-enantiomer. The polypeptide is Peptide methionine sulfoxide reductase A1 (MSRA1) (Arabidopsis thaliana (Mouse-ear cress)).